The following is a 247-amino-acid chain: Protein GrpE (247 aa).

Disordered regions lie at residues 1–68 and 226–247; these read MKKN…KNDD and PAEK…KNEN. Basic and acidic residues-rich tracts occupy residues 7–35, 43–54, and 228–247; these read KHAD…KDEQ, TSKENPQEDKAE, and EKQD…KNEN.

This sequence belongs to the GrpE family. Homodimer.

It localises to the cytoplasm. Participates actively in the response to hyperosmotic and heat shock by preventing the aggregation of stress-denatured proteins, in association with DnaK and GrpE. It is the nucleotide exchange factor for DnaK and may function as a thermosensor. Unfolded proteins bind initially to DnaJ; upon interaction with the DnaJ-bound protein, DnaK hydrolyzes its bound ATP, resulting in the formation of a stable complex. GrpE releases ADP from DnaK; ATP binding to DnaK triggers the release of the substrate protein, thus completing the reaction cycle. Several rounds of ATP-dependent interactions between DnaJ, DnaK and GrpE are required for fully efficient folding. The sequence is that of Protein GrpE from Treponema denticola (strain ATCC 35405 / DSM 14222 / CIP 103919 / JCM 8153 / KCTC 15104).